A 139-amino-acid polypeptide reads, in one-letter code: MKHGKVHRKLNRTAEHRKAMFANMCAALIKHEQIVTTLPKAKELRPIVEKLVTLGKKGGLDKRRQAIAEMRDIEQVKKLFDVLAPRYKDRNGGYTRIIKAGFRYGDNAAMAVIEFVDRDEDAKGRDSGPTQDNSEAEAA.

The tract at residues 120-139 is disordered; the sequence is EDAKGRDSGPTQDNSEAEAA.

In terms of assembly, part of the 50S ribosomal subunit. Contacts protein L32. Post-translationally, may be methylated thrice, on undetermined residues.

The sequence is that of Large ribosomal subunit protein bL17 from Rhodopseudomonas palustris (strain ATCC BAA-98 / CGA009).